The primary structure comprises 173 residues: ADP-ribosylation factor-like protein 11 (173 aa).

Residue Gly2 is the site of N-myristoyl glycine attachment. GTP-binding positions include 17-24, 61-65, and 120-123; these read GLDCAGKT, DIGGQ, and NKQE.

The protein belongs to the small GTPase superfamily. Arf family.

May play a role in apoptosis. May act as a tumor suppressor. The polypeptide is ADP-ribosylation factor-like protein 11 (Arl11) (Rattus norvegicus (Rat)).